The sequence spans 78 residues: Large ribosomal subunit protein bL28 (78 aa).

The disordered stretch occupies residues 1 to 23 (MSRICQITGKKPLSGNKRSHSMN).

Belongs to the bacterial ribosomal protein bL28 family.

The polypeptide is Large ribosomal subunit protein bL28 (Wigglesworthia glossinidia brevipalpis).